Here is a 484-residue protein sequence, read N- to C-terminus: Cobyric acid synthase (484 aa).

Residues 251-438 (ALKIAVPVLP…LHGLFCSDAY (188 aa)) form the GATase cobBQ-type domain. Catalysis depends on cysteine 333, which acts as the Nucleophile. Histidine 430 is an active-site residue.

Belongs to the CobB/CobQ family. CobQ subfamily.

Its pathway is cofactor biosynthesis; adenosylcobalamin biosynthesis. In terms of biological role, catalyzes amidations at positions B, D, E, and G on adenosylcobyrinic A,C-diamide. NH(2) groups are provided by glutamine, and one molecule of ATP is hydrogenolyzed for each amidation. This chain is Cobyric acid synthase, found in Rhizobium rhizogenes (strain K84 / ATCC BAA-868) (Agrobacterium radiobacter).